We begin with the raw amino-acid sequence, 210 residues long: DNA dC-&gt;dU-editing enzyme APOBEC-3H (210 aa).

Positions 4–126 (LTAKTFSLQF…PNYQEGLLLL (123 aa)) constitute a CMP/dCMP-type deaminase domain. His-54 is a Zn(2+) binding site. The active-site Proton donor is the Glu-56. Zn(2+) contacts are provided by Cys-85 and Cys-88. A necessary and sufficient for localization to the cytoplasm region spans residues 182 to 210 (SRSVDVLENGLRSLQLGPVTPSSSIRNSR).

Belongs to the cytidine and deoxycytidylate deaminase family. In terms of assembly, homodimer. Zn(2+) serves as cofactor.

Its subcellular location is the cytoplasm. The enzyme catalyses a 2'-deoxycytidine in single-stranded DNA + H2O + H(+) = a 2'-deoxyuridine in single-stranded DNA + NH4(+). Antiviral activity is neutralized by the simian immunodeficiency virus rhesus (SIV-mac) virion infectivity factor (VIF). Its function is as follows. DNA deaminase (cytidine deaminase) which acts as an inhibitor of retrovirus replication and retrotransposon mobility via deaminase-dependent and -independent mechanisms. Exhibits antiviral activity against vif-deficient HIV-1. After the penetration of retroviral nucleocapsids into target cells of infection and the initiation of reverse transcription, it can induce the conversion of cytosine to uracil in the minus-sense single-strand viral DNA, leading to G-to-A hypermutations in the subsequent plus-strand viral DNA. The resultant detrimental levels of mutations in the proviral genome, along with a deamination-independent mechanism that works prior to the proviral integration, together exert efficient antiretroviral effects in infected target cells. Selectively targets single-stranded DNA and does not deaminate double-stranded DNA or single- or double-stranded RNA. This is DNA dC-&gt;dU-editing enzyme APOBEC-3H from Macaca mulatta (Rhesus macaque).